We begin with the raw amino-acid sequence, 633 residues long: Putative oligopeptide transporter HI_0561 (633 aa).

A run of 15 helical transmembrane segments spans residues 8-28, 45-65, 70-90, 128-148, 180-200, 230-250, 281-301, 311-331, 345-365, 379-399, 420-440, 483-503, 515-535, 564-584, and 604-624; these read GVTFASSIPAAVISMAVLKFF, SAGTLSSVIFVLPGLLMMGYW, FWQTMLICAAGGTLGVLFTIP, IAYGGVLAGLVAFLTNGLRVM, IGIVGGIAMLIGVILTWGVAV, IGVGTIGIAAIWTLLILMKPM, MIYILIATVALIVISLHHFIA, ILLVVVCTFLAVFIGFFVAAA, PISGIGIISVIVISLVLVSIG, FLTALTLFTASIVITTACISN, VALIIGCFVGALVIAPVLEIL, WTYILTGVGLGAVLITIDAFL, VIAVGIGIYLPPSINTPVIVG, LFSAGLIVGESLMGVILAFII, and WDTIGEWFGLIVFIVGIVIFA.

It belongs to the oligopeptide OPT transporter family.

It localises to the cell membrane. In Haemophilus influenzae (strain ATCC 51907 / DSM 11121 / KW20 / Rd), this protein is Putative oligopeptide transporter HI_0561.